The primary structure comprises 681 residues: Sodium-dependent phosphate transporter 1 (681 aa).

6 helical membrane-spanning segments follow: residues 25–45, 66–86, 106–126, 162–182, 201–221, and 234–254; these read NLWM…SVGA, ACIL…AKVS, LMAG…VASF, IVMS…ILFF, ALPI…MYTG, and GTIL…WFFV. Residues 266–295 form a disordered region; sequence VKSSPSESPLMEKKSNLKEDHEETKMAPGD. A phosphoserine mark is found at serine 269 and serine 273. Positions 275 to 295 are enriched in basic and acidic residues; sequence LMEKKSNLKEDHEETKMAPGD. A helical membrane pass occupies residues 514-534; that stretch reads VSLLFQFLQILTACFGSFAHG. Positions 553 to 560 are a; that stretch reads KQEASTKA. 3 consecutive transmembrane segments (helical) span residues 561-581, 602-622, and 652-672; these read ATPI…LWVW, FSIE…GLPI, and IFMA…AIMA.

The protein belongs to the inorganic phosphate transporter (PiT) (TC 2.A.20) family. In terms of tissue distribution, ubiquitously expressed.

Its subcellular location is the cell membrane. It carries out the reaction 2 Na(+)(out) + phosphate(out) = 2 Na(+)(in) + phosphate(in). In terms of biological role, sodium-phosphate symporter which preferentially transports the monovalent form of phosphate with a stoichiometry of two sodium ions per phosphate ion. May play a role in extracellular matrix and cartilage calcification as well as in vascular calcification. Essential for cell proliferation but this function is independent of its phosphate transporter activity. Its function is as follows. (Microbial infection) May function as a retroviral receptor but do not confer infection susceptibility to Gibbon Ape Leukemia Virus (GaLV), Simian sarcoma-associated virus (SSAV) and Feline leukemia virus subgroup B (FeLV-B). The chain is Sodium-dependent phosphate transporter 1 (Slc20a1) from Mus musculus (Mouse).